Here is a 459-residue protein sequence, read N- to C-terminus: Spermatogenesis-associated protein 1 (459 aa).

A compositionally biased stretch (basic and acidic residues) spans 193-205; the sequence is LKELPNKNQEEAG. The interval 193–213 is disordered; sequence LKELPNKNQEEAGGKATAEKS. 2 coiled-coil regions span residues 287 to 374 and 400 to 453; these read TDIS…YKKL and LIIQ…KKII.

As to quaternary structure, interacts with IFT20.

The protein resides in the cytoplasmic vesicle. The protein localises to the secretory vesicle. It localises to the acrosome. In Homo sapiens (Human), this protein is Spermatogenesis-associated protein 1 (SPATA1).